The chain runs to 701 residues: MARITPITQYRNIGISAHIDAGKTTTTERILFYTGVNHKLGEVHDGAATMDWMVQEQERGITITSAATTTFWSGMAKQFLSHRINIIDTPGHVDFTIEVERSMRVLDGVVMIYCAVGGVQPQSETVWRQANKYKIPRIAFINKMDRTGADFLKVVNQISTRLHVISVPIQLSIGSEENFQGIVDLVKMKAIRWSEHDQGITFKYYDIPKDLLQLANKWHMNLVEVAAEADDELMEKYLQYDDLEEKDIKIGLRKRALNNEIILITCGSAFKNKGVQALLDAIIEYLPSPKDSYKTKNFINQKDSIKNYRYADDKQPFSALAFKIASDSFVGNLTFFRVYSGIVRSGDVVLNSVKDHTERFGRIVQMHANKREEIREVRAGDIAAAIGLKNVTTGDTLCDVNHPIVLEKMDFPEPVISIAVEPKTKIDQEKMGLSLNRLAKEDPSFRVRIDHESNQTIISGMGELHLEIIIDRMRREFKVDANIGKPQVAYRETILNKIENVSGKYIKQSGGRGQYGHVVIDIFPLKPNKSGYLFVNDIKGGVIPGEYISSIDKGIQEQLKSGPLAGYPVVDIGVRLHDGSYHDVDSSELAFKLAASHAFKSAFKLANPILLEPIMHVEVETPEEYMGDVIGDINRRRGIIEGMVDDMIGGKSIKAFVPLSEMFGYATDLRSKTQGRASYSMEFLKYTEAPRSIYDSIVSTQ.

Residues 8–290 (TQYRNIGISA…AIIEYLPSPK (283 aa)) enclose the tr-type G domain. GTP-binding positions include 17–24 (AHIDAGKT), 88–92 (DTPGH), and 142–145 (NKMD).

Belongs to the TRAFAC class translation factor GTPase superfamily. Classic translation factor GTPase family. EF-G/EF-2 subfamily.

It is found in the cytoplasm. In terms of biological role, catalyzes the GTP-dependent ribosomal translocation step during translation elongation. During this step, the ribosome changes from the pre-translocational (PRE) to the post-translocational (POST) state as the newly formed A-site-bound peptidyl-tRNA and P-site-bound deacylated tRNA move to the P and E sites, respectively. Catalyzes the coordinated movement of the two tRNA molecules, the mRNA and conformational changes in the ribosome. The chain is Elongation factor G from Buchnera aphidicola subsp. Cinara cedri (strain Cc).